The primary structure comprises 728 residues: Ribosome biogenesis protein bop1-B (728 aa).

Residues 1–114 (MKRGSKRESG…ENDSSDEEDI (114 aa)) are disordered. The segment covering 50–67 (SGTDSSDDEEDHSSEEVQ) has biased composition (acidic residues). WD repeat units follow at residues 393-432 (GHKD…CMKS), 434-474 (VLEG…RLLC), 514-556 (KHQK…SQNP), 559-597 (KNKG…LTKK), 600-639 (TNCK…KPYK), 643-682 (HHKK…DLLQ), and 698-728 (HRDL…RLFT).

The protein belongs to the WD repeat BOP1/ERB1 family. As to quaternary structure, component of the PeBoW complex, composed of bop1, pes1 and wdr12. The complex is held together by bop1, which interacts with pes1 via its N-terminal domain and with wdr12 via a high-affinity interaction between the seven-bladed beta-propeller domains of the 2 proteins. The PeBoW complex associates with the 66S pre-ribosome.

It is found in the nucleus. The protein resides in the nucleolus. It localises to the nucleoplasm. Component of the PeBoW complex, which is required for maturation of 28S and 5.8S ribosomal RNAs and formation of the 60S ribosome. This is Ribosome biogenesis protein bop1-B (bop1-b) from Xenopus laevis (African clawed frog).